We begin with the raw amino-acid sequence, 411 residues long: Serine hydroxymethyltransferase (411 aa).

Residue 120–122 (GHL) participates in (6S)-5,6,7,8-tetrahydrofolate binding. N6-(pyridoxal phosphate)lysine is present on Lys225. 350–352 (SPF) is a (6S)-5,6,7,8-tetrahydrofolate binding site.

Belongs to the SHMT family. In terms of assembly, homodimer. Requires pyridoxal 5'-phosphate as cofactor.

It localises to the cytoplasm. The catalysed reaction is (6R)-5,10-methylene-5,6,7,8-tetrahydrofolate + glycine + H2O = (6S)-5,6,7,8-tetrahydrofolate + L-serine. The protein operates within one-carbon metabolism; tetrahydrofolate interconversion. It functions in the pathway amino-acid biosynthesis; glycine biosynthesis; glycine from L-serine: step 1/1. Functionally, catalyzes the reversible interconversion of serine and glycine with tetrahydrofolate (THF) serving as the one-carbon carrier. This reaction serves as the major source of one-carbon groups required for the biosynthesis of purines, thymidylate, methionine, and other important biomolecules. Also exhibits THF-independent aldolase activity toward beta-hydroxyamino acids, producing glycine and aldehydes, via a retro-aldol mechanism. This Lactobacillus johnsonii (strain CNCM I-12250 / La1 / NCC 533) protein is Serine hydroxymethyltransferase.